We begin with the raw amino-acid sequence, 461 residues long: tRNA (guanine(10)-N(2))-methyltransferase TRMT11 (461 aa).

It belongs to the class I-like SAM-binding methyltransferase superfamily. TRM11 methyltransferase family. As to quaternary structure, part of the heterodimeric TRMT11-TRM112 methyltransferase complex; this complex forms an active tRNA methyltransferase, where TRMT112 acts as an activator of the catalytic subunit TRMT11.

Its subcellular location is the cytoplasm. The catalysed reaction is guanosine(10) in tRNA + S-adenosyl-L-methionine = N(2)-methylguanosine(10) in tRNA + S-adenosyl-L-homocysteine + H(+). Functionally, catalytic subunit of the TRMT11-TRM112 methyltransferase complex, that specifically mediates the S-adenosyl-L-methionine-dependent N(2)-methylation of guanosine nucleotide at position 10 (m2G10) in tRNAs. This is one of the major tRNA (guanine-N(2))-methyltransferases. The protein is tRNA (guanine(10)-N(2))-methyltransferase TRMT11 of Gallus gallus (Chicken).